The following is a 701-amino-acid chain: ER-retained PMA1-suppressing protein 1 (701 aa).

An N-terminal signal peptide occupies residues 1–27 (MKMNLKRLVVTFFSCITFLLKFTIAAA). Residues 28–142 (EPPEGFPEPL…LIAFARRESM (115 aa)) form the Thioredoxin 1 domain. C60 and C63 are disulfide-bonded. N85 carries an N-linked (GlcNAc...) asparagine glycan. A disulfide bridge links C200 with C203. N-linked (GlcNAc...) asparagine glycans are attached at residues N264, N299, and N370. Positions 408–446 (PTFFMFKDGDPISYVFPGYSTTEMRNIDAIMDWVKKYSN) constitute a Thioredoxin 2 domain. Residues 646–666 (IIHGNGMPGYLIVIVLFIAIL) traverse the membrane as a helical segment.

This sequence belongs to the protein disulfide isomerase family. As to quaternary structure, interacts with mutated PMA1-D378N but not wild type PMA1. Interacts with EUG1, KAR2, MPD1 and PDI1.

It localises to the endoplasmic reticulum membrane. The enzyme catalyses Catalyzes the rearrangement of -S-S- bonds in proteins.. Its function is as follows. Acts as a membrane-bound chaperone in endoplasmic reticulum quality control. Probably facilitates presentation of substrate to membrane-bound components of the degradation machinery. In Saccharomyces cerevisiae (strain ATCC 204508 / S288c) (Baker's yeast), this protein is ER-retained PMA1-suppressing protein 1 (EPS1).